The following is a 668-amino-acid chain: DNA ligase (668 aa).

NAD(+) is bound by residues 34–38 (DAEYD), 83–84 (SL), and E113. The active-site N6-AMP-lysine intermediate is K115. 4 residues coordinate NAD(+): R136, E170, K286, and K310. Residues C404, C407, C422, and C427 each contribute to the Zn(2+) site. In terms of domain architecture, BRCT spans 590-668 (ESDSYFAGKT…EVKMLEELKK (79 aa)).

This sequence belongs to the NAD-dependent DNA ligase family. LigA subfamily. The cofactor is Mg(2+). Requires Mn(2+) as cofactor.

The catalysed reaction is NAD(+) + (deoxyribonucleotide)n-3'-hydroxyl + 5'-phospho-(deoxyribonucleotide)m = (deoxyribonucleotide)n+m + AMP + beta-nicotinamide D-nucleotide.. DNA ligase that catalyzes the formation of phosphodiester linkages between 5'-phosphoryl and 3'-hydroxyl groups in double-stranded DNA using NAD as a coenzyme and as the energy source for the reaction. It is essential for DNA replication and repair of damaged DNA. The sequence is that of DNA ligase from Bacillus pumilus (strain SAFR-032).